Reading from the N-terminus, the 430-residue chain is Adenylosuccinate synthetase (430 aa).

GTP-binding positions include 12–18 and 40–42; these read GDEGKGK and GHT. Aspartate 13 functions as the Proton acceptor in the catalytic mechanism. Aspartate 13 and glycine 40 together coordinate Mg(2+). Residues 13-16, 38-41, threonine 128, arginine 142, glutamine 223, threonine 238, and arginine 302 contribute to the IMP site; these read DEGK and NAGH. Histidine 41 serves as the catalytic Proton donor. Residue 298–304 coordinates substrate; the sequence is TTTGRPR. GTP contacts are provided by residues arginine 304, 330-332, and 412-414; these read SID and SVG.

Belongs to the adenylosuccinate synthetase family. In terms of assembly, homodimer. Mg(2+) is required as a cofactor.

It is found in the cytoplasm. The catalysed reaction is IMP + L-aspartate + GTP = N(6)-(1,2-dicarboxyethyl)-AMP + GDP + phosphate + 2 H(+). It participates in purine metabolism; AMP biosynthesis via de novo pathway; AMP from IMP: step 1/2. Functionally, plays an important role in the de novo pathway of purine nucleotide biosynthesis. Catalyzes the first committed step in the biosynthesis of AMP from IMP. In Streptococcus gordonii (strain Challis / ATCC 35105 / BCRC 15272 / CH1 / DL1 / V288), this protein is Adenylosuccinate synthetase.